The primary structure comprises 367 residues: Alginate lyase (367 aa).

The first 27 residues, 1–27, serve as a signal peptide directing secretion; sequence MKTSHLIRITLPGALAAALLASQVSQA. Residues 65–66, 138–139, and Tyr256 each bind substrate; these read SK and HT.

This sequence belongs to the polysaccharide lyase 5 family.

It is found in the periplasm. The catalysed reaction is Eliminative cleavage of alginate to give oligosaccharides with 4-deoxy-alpha-L-erythro-hex-4-enuronosyl groups at their non-reducing ends and beta-D-mannuronate at their reducing end.. Functionally, catalyzes the depolymerization of alginate by cleaving the beta-1,4 glycosidic bond between two adjacent sugar residues via a beta-elimination mechanism. May serve to degrade mislocalized alginate that is trapped in the periplasmic space. The polypeptide is Alginate lyase (Pseudomonas paraeruginosa (strain DSM 24068 / PA7) (Pseudomonas aeruginosa (strain PA7))).